The primary structure comprises 121 residues: Protein CHLORORESPIRATORY REDUCTION 42, chloroplastic (121 aa).

As to quaternary structure, biogenesis factor component of the plastidial NDH subcomplex A.

The protein resides in the plastid. It is found in the chloroplast. Its subcellular location is the chloroplast stroma. Functionally, required for both formation and activity of the chloroplast NAD(P)H dehydrogenase (NDH) complex of the photosynthetic electron transport chain. Functions in assembly or stabilization of the NDH complex; probably involved, together with CRR1 and CRR6, in the incorporation of NdhJ, NdhM, NdhK and NdhI into the NDH subcomplex A assembly intermediate (NAI500) to produce the complex NAI400. This chain is Protein CHLORORESPIRATORY REDUCTION 42, chloroplastic, found in Arabidopsis thaliana (Mouse-ear cress).